The chain runs to 590 residues: Neuronal PAS domain-containing protein 1 (590 aa).

Residues 45–98 (QRKEKSRNAARSRRGKENLEFFELAKLLPLPGAISSQLDKASIVRLSVTYLRLR) enclose the bHLH domain. The PAS 1 domain maps to 135 to 207 (EQHLGGHILQ…LGLRTPTPGP (73 aa)). Residues 198–229 (LGLRTPTPGPPTPPSVSSSSSSSSSLADTPEI) are disordered. The segment covering 212–222 (SVSSSSSSSSS) has biased composition (low complexity). The 67-residue stretch at 293-359 (APLAELPLHG…IRQSHVDLLD (67 aa)) folds into the PAS 2 domain. The PAC domain occupies 365–408 (TGYYRWLQRAGGFVWLQSVATVAGSGKSPGEHHVLWVSHVLSQA). Residues 425–494 (ACEEASSPGP…SHPATPRPEF (70 aa)) are disordered. Residues 433 to 442 (GPEPTEPEPP) are compositionally biased toward pro residues. A compositionally biased stretch (basic and acidic residues) spans 463-476 (IKVEPGPRETKGSE).

In terms of assembly, efficient DNA binding requires dimerization with another bHLH protein. Interacts with ARNT; forms a heterodimer that binds core DNA sequence 5'-[AG]CGTG-3' within the hypoxia response element (HRE) leading to a transcriptional repressor on its target gene TH.

Its subcellular location is the nucleus. May control regulatory pathways relevant to schizophrenia and to psychotic illness. May play a role in late central nervous system development by modulating EPO expression in response to cellular oxygen level. Forms a heterodimer that binds core DNA sequence 5'-TACGTG-3' within the hypoxia response element (HRE) leading to transcriptional repression on its target gene TH. In Homo sapiens (Human), this protein is Neuronal PAS domain-containing protein 1 (NPAS1).